A 328-amino-acid chain; its full sequence is Cytochrome c biogenesis protein CcsA (328 aa).

A run of 8 helical transmembrane segments spans residues 15-35 (FLVL…PSVP), 37-57 (LQAL…ALLG), 68-88 (ISNL…AHLI), 97-117 (LVGV…ALTL), 142-162 (VMML…AFLF), 236-256 (IIGL…VWAN), 271-291 (WALI…TKGW), and 297-317 (AILA…VNLL).

The protein belongs to the CcmF/CycK/Ccl1/NrfE/CcsA family. May interact with ccs1.

The protein resides in the cellular thylakoid membrane. Its function is as follows. Required during biogenesis of c-type cytochromes (cytochrome c6 and cytochrome f) at the step of heme attachment. This Gloeothece citriformis (strain PCC 7424) (Cyanothece sp. (strain PCC 7424)) protein is Cytochrome c biogenesis protein CcsA.